The sequence spans 275 residues: Elongation factor Ts (275 aa).

The tract at residues 76 to 79 (TDFV) is involved in Mg(2+) ion dislocation from EF-Tu.

The protein belongs to the EF-Ts family.

It is found in the cytoplasm. Functionally, associates with the EF-Tu.GDP complex and induces the exchange of GDP to GTP. It remains bound to the aminoacyl-tRNA.EF-Tu.GTP complex up to the GTP hydrolysis stage on the ribosome. This is Elongation factor Ts from Corynebacterium kroppenstedtii (strain DSM 44385 / JCM 11950 / CIP 105744 / CCUG 35717).